A 120-amino-acid chain; its full sequence is Immunoglobulin kappa variable 2D-29 (120 aa).

The signal sequence occupies residues 1–20; that stretch reads MRLPAQLLGLLMLWIPGSSA. The interval 21–43 is framework-1; sequence DIVMTQTPLSLSVTPGQPASISC. In terms of domain architecture, Ig-like spans 21–120; it reads DIVMTQTPLS…YYCMQSIQLP (100 aa). A disulfide bond links Cys-43 and Cys-113. The interval 44-59 is complementarity-determining-1; that stretch reads KSSQSLLHSDGKTYLY. Residues 60–74 form a framework-2 region; the sequence is WYLQKPGQPPQLLIY. A complementarity-determining-2 region spans residues 75–81; sequence EVSNRFS. The interval 82 to 113 is framework-3; that stretch reads GVPDRFSGSGSGTDFTLKISRVEAEDVGVYYC. The segment at 114–120 is complementarity-determining-3; that stretch reads MQSIQLP.

Immunoglobulins are composed of two identical heavy chains and two identical light chains; disulfide-linked.

The protein resides in the secreted. Its subcellular location is the cell membrane. Functionally, v region of the variable domain of immunoglobulin light chains that participates in the antigen recognition. Immunoglobulins, also known as antibodies, are membrane-bound or secreted glycoproteins produced by B lymphocytes. In the recognition phase of humoral immunity, the membrane-bound immunoglobulins serve as receptors which, upon binding of a specific antigen, trigger the clonal expansion and differentiation of B lymphocytes into immunoglobulins-secreting plasma cells. Secreted immunoglobulins mediate the effector phase of humoral immunity, which results in the elimination of bound antigens. The antigen binding site is formed by the variable domain of one heavy chain, together with that of its associated light chain. Thus, each immunoglobulin has two antigen binding sites with remarkable affinity for a particular antigen. The variable domains are assembled by a process called V-(D)-J rearrangement and can then be subjected to somatic hypermutations which, after exposure to antigen and selection, allow affinity maturation for a particular antigen. The polypeptide is Immunoglobulin kappa variable 2D-29 (Homo sapiens (Human)).